The sequence spans 500 residues: Cytochrome P450 71D13 (500 aa).

The helical; Signal-anchor for type II membrane protein transmembrane segment at 3–23 threads the bilayer; the sequence is LQISSAIIILVVTYTISLLII. A heme-binding site is contributed by C439.

The protein belongs to the cytochrome P450 family. Heme serves as cofactor.

It is found in the endoplasmic reticulum membrane. The catalysed reaction is (4S)-limonene + reduced [NADPH--hemoprotein reductase] + O2 = (1S,6R)-isopiperitenol + oxidized [NADPH--hemoprotein reductase] + H2O + H(+). Its function is as follows. Hydroxylates (-)-(4S)-limonene to (-)-trans-isopiperitenol, a precursor of (-)-menthol, responsible for the cooling sensation of peppermint. The polypeptide is Cytochrome P450 71D13 (CYP71D13) (Mentha piperita (Peppermint)).